We begin with the raw amino-acid sequence, 129 residues long: Glycine cleavage system H protein (129 aa).

The Lipoyl-binding domain maps to 24–106 (SVVVGVTQHA…YGAGWIVEIE (83 aa)). The residue at position 65 (Lys65) is an N6-lipoyllysine.

It belongs to the GcvH family. The glycine cleavage system is composed of four proteins: P, T, L and H. Requires (R)-lipoate as cofactor.

In terms of biological role, the glycine cleavage system catalyzes the degradation of glycine. The H protein shuttles the methylamine group of glycine from the P protein to the T protein. This is Glycine cleavage system H protein from Myxococcus xanthus (strain DK1622).